Reading from the N-terminus, the 937-residue chain is Coiled-coil domain-containing protein 39 (937 aa).

Coiled coils occupy residues 16–137 (AIPV…CQMN), 165–339 (QQDD…KKDI), 365–615 (EKTL…SQIR), and 664–816 (VIKA…LKQT). Residues 866–937 (LPTARGPSSR…NIPKEKKLSK (72 aa)) are disordered. Over residues 873-887 (SSRSSSQSSSLSSFR) the composition is skewed to low complexity. Phosphoserine is present on residues S888 and S896. Positions 915–928 (NDSSRSASSGSNSN) are enriched in low complexity.

Belongs to the CCDC39 family. Strongly expressed in tissues rich in ciliated cells. Expressed in olfactory and vomeronasal sensory neurons and the respiratory epithelium. Expressed in node cells carrying motile cilia, in upper and lower airways, and in ependymal and choroid plexus cells.

Its subcellular location is the cytoplasm. The protein localises to the cytoskeleton. The protein resides in the cilium axoneme. In terms of biological role, required for assembly of dynein regulatory complex (DRC) and inner dynein arm (IDA) complexes, which are responsible for ciliary beat regulation, thereby playing a central role in motility in cilia and flagella. Probably acts together with CCDC40 to form a molecular ruler that determines the 96 nanometer (nm) repeat length and arrangements of components in cilia and flagella. Not required for outer dynein arm complexes assembly. The polypeptide is Coiled-coil domain-containing protein 39 (Mus musculus (Mouse)).